The sequence spans 438 residues: GTPase Der (438 aa).

EngA-type G domains lie at 4 to 168 (PVVA…DDNS) and 177 to 352 (TKVC…NNYS). GTP contacts are provided by residues 10-17 (GRANVGKS), 57-61 (DTGGL), 120-123 (NKID), 183-190 (GKPNVGKS), 230-234 (DTAGL), and 295-298 (NKWD). Residues 353 to 437 (MRISTGVLND…PLQFEFKTRG (85 aa)) enclose the KH-like domain.

Belongs to the TRAFAC class TrmE-Era-EngA-EngB-Septin-like GTPase superfamily. EngA (Der) GTPase family. As to quaternary structure, associates with the 50S ribosomal subunit.

Functionally, GTPase that plays an essential role in the late steps of ribosome biogenesis. The chain is GTPase Der from Finegoldia magna (strain ATCC 29328 / DSM 20472 / WAL 2508) (Peptostreptococcus magnus).